A 300-amino-acid polypeptide reads, in one-letter code: MASPLSQSVFPHFPPPSPAATPPPAPTTPSTPPPHFISPPPHSVPPPSPPHSVPPPLHPVPPPSPPHPVSPPPHTVPPPSPPHPVSPPPHTVPPPSPPHPVFPPPHTVPPPSPHFVPPPPNMVPPPSPPHANPPPPPPPHSVPPPPHTVPPPPPPPHIIPPPAHALSPPPPHIIPPPPPSPSNHSTTIVVIFVSCGGVFFLAFAMAALWCFLKKKKKKMVQKAENIHFDEHRKVTERIEQGPHGTETAILSVEDDIHIEEDIKKSELENFRKGLHLNYGNTYNIDTGKPSSSFGHHYLHG.

A disordered region spans residues 1–181; sequence MASPLSQSVF…HIIPPPPPSP (181 aa). Residues 1–187 lie on the Extracellular side of the membrane; that stretch reads MASPLSQSVF…PPSPSNHSTT (187 aa). Positions 12-181 are enriched in pro residues; that stretch reads HFPPPSPAAT…HIIPPPPPSP (170 aa). N-linked (GlcNAc...) asparagine glycosylation is present at N183. A helical membrane pass occupies residues 188-208; sequence IVVIFVSCGGVFFLAFAMAAL. Topologically, residues 209 to 300 are cytoplasmic; that stretch reads WCFLKKKKKK…SSFGHHYLHG (92 aa).

As to expression, accumulates in cells differentiating into tracheary element (TE) which undergo secondary cell wall (SCW) formation.

Its subcellular location is the cell membrane. It localises to the secreted. It is found in the cell wall. Functionally, involved in the secondary cell wall (SCW) formation of vessel elements (e.g. protoxylem and metaxylem), thus promoting tracheary element (TE) differentiation. This Zinnia elegans (Garden zinnia) protein is Protein TRACHEARY ELEMENT DIFFERENTIATION-RELATED 7A.